Here is a 115-residue protein sequence, read N- to C-terminus: Protein SPIRAL1-like 2 (115 aa).

Residues 29–48 (AKAKPAAAAEKETTPAPVKK) form a disordered region.

It belongs to the SPIRAL1 family.

Functionally, acts in maintaining the cortical microtubules organization essential for anisotropic cell growth. This Oryza sativa subsp. japonica (Rice) protein is Protein SPIRAL1-like 2.